Consider the following 559-residue polypeptide: DnaJ homolog subfamily C member 11 (559 aa).

N-acetylalanine is present on Ala-2. One can recognise a J domain in the interval 14-82 (DYYSLLNVRR…QTRAIYDIYG (69 aa)). Ser-204 is modified (phosphoserine). Residues 415–457 (QKEKELEKQRENTASDILQKKQEAEAAVRLMQESVRRIIEAEE) adopt a coiled-coil conformation.

It belongs to the DNAJC11 family. As to quaternary structure, associates with the mitochondrial contact site and cristae organizing system (MICOS) complex, composed of at least MICOS10/MIC10, CHCHD3/MIC19, CHCHD6/MIC25, APOOL/MIC27, IMMT/MIC60, APOO/MIC23/MIC26 and QIL1/MIC13. This complex was also known under the names MINOS or MitOS complex. The MICOS complex associates with mitochondrial outer membrane proteins SAMM50, MTX1 and MTX2 (together described as components of the mitochondrial outer membrane sorting assembly machinery (SAM) complex) and DNAJC11, mitochondrial inner membrane protein TMEM11 and with HSPA9. The MICOS and SAM complexes together with DNAJC11 are part of a large protein complex spanning both membranes termed the mitochondrial intermembrane space bridging (MIB) complex.

Its subcellular location is the mitochondrion. It is found in the mitochondrion outer membrane. Its function is as follows. Required for mitochondrial inner membrane organization. Seems to function through its association with the MICOS complex and the mitochondrial outer membrane sorting assembly machinery (SAM) complex. This chain is DnaJ homolog subfamily C member 11 (Dnajc11), found in Mus musculus (Mouse).